Consider the following 122-residue polypeptide: Large ribosomal subunit protein uL14c (122 aa).

It belongs to the universal ribosomal protein uL14 family. In terms of assembly, part of the 50S ribosomal subunit.

It localises to the plastid. The protein resides in the chloroplast. Its function is as follows. Binds to 23S rRNA. The chain is Large ribosomal subunit protein uL14c from Pinus koraiensis (Korean pine).